A 127-amino-acid chain; its full sequence is uncharacterized protein (127 aa).

The tract at residues 69–94 (GDGGSVPEKGKHGILGAQGQEHPGLN) is disordered.

This is an uncharacterized protein from Homo sapiens (Human).